A 382-amino-acid polypeptide reads, in one-letter code: MGDWSALGKLLDKVQAYSTAGGKVWLSVLFIFRILLLGTAVESAWGDEQSAFRCNTQQPGCENVCYDKSFPISHVRFWVLQIIFVSVPTLLYLAHVFYVMRKEEKLNKKEEELKVAQTDGVNVEMHLKQIEIKKFKYGIEEHGKVKMRGGLLRTYIISILFKSVFEVAFLLIQWYIYGFSLSAVYTCKRDPCPHQVDCFLSRPTEKTIFIIFMLVVSLVSLALNIIELFYVFFKGVKDRVKGKSDPYHATTGPLSPSKDCGSPKYAYFNGCSSPTAPLSPMSPPGYKLVTGDRNNSSCRNYNKQASEQNWANYSAEQNRMGQAGSTISNSHAQPFDFPDDNQNSKKLAAGHELQPLAIVDQRPSSRASSRASSRPRPDDLEI.

The Cytoplasmic portion of the chain corresponds to 2 to 23 (GDWSALGKLLDKVQAYSTAGGK). Serine 5 is subject to Phosphoserine. A helical transmembrane segment spans residues 24 to 44 (VWLSVLFIFRILLLGTAVESA). At 45 to 76 (WGDEQSAFRCNTQQPGCENVCYDKSFPISHVR) the chain is on the extracellular side. 2 disulfide bridges follow: cysteine 54/cysteine 192 and cysteine 187/cysteine 198. The chain crosses the membrane as a helical span at residues 77 to 97 (FWVLQIIFVSVPTLLYLAHVF). Residues 98–155 (YVMRKEEKLNKKEEELKVAQTDGVNVEMHLKQIEIKKFKYGIEEHGKVKMRGGLLRTY) lie on the Cytoplasmic side of the membrane. Lysine 144 is covalently cross-linked (Glycyl lysine isopeptide (Lys-Gly) (interchain with G-Cter in SUMO)). A helical membrane pass occupies residues 156–176 (IISILFKSVFEVAFLLIQWYI). The Extracellular portion of the chain corresponds to 177 to 207 (YGFSLSAVYTCKRDPCPHQVDCFLSRPTEKT). Residues 208–228 (IFIIFMLVVSLVSLALNIIEL) traverse the membrane as a helical segment. Over 229-382 (FYVFFKGVKD…SRPRPDDLEI (154 aa)) the chain is Cytoplasmic. A Glycyl lysine isopeptide (Lys-Gly) (interchain with G-Cter in SUMO) cross-link involves residue lysine 237. The interaction with NOV stretch occupies residues 244 to 382 (SDPYHATTGP…SRPRPDDLEI (139 aa)). Phosphotyrosine is present on tyrosine 247. Phosphoserine occurs at positions 255, 257, and 262. Residues 264 to 382 (KYAYFNGCSS…SRPRPDDLEI (119 aa)) are interaction with UBQLN4. Cysteine 271 is subject to S-nitrosocysteine. Threonine 275 carries the post-translational modification Phosphothreonine. Phosphoserine occurs at positions 306 and 314. The segment covering 317-332 (QNRMGQAGSTISNSHA) has biased composition (polar residues). A disordered region spans residues 317-382 (QNRMGQAGST…SRPRPDDLEI (66 aa)). Residue serine 325 is modified to Phosphoserine; by CK1. A Phosphothreonine modification is found at threonine 326. Phosphoserine; by CK1 is present on residues serine 328 and serine 330. 2 positions are modified to phosphoserine: serine 344 and serine 365. The segment covering 362–374 (RPSSRASSRASSR) has biased composition (low complexity). Position 368 is a phosphoserine; by PKC/PRKCG and PKC/PRKCD (serine 368). Phosphoserine is present on residues serine 369 and serine 373.

This sequence belongs to the connexin family. Alpha-type (group II) subfamily. A connexon is composed of a hexamer of connexins. Interacts with SGSM3. Interacts with RIC1/CIP150. Interacts with CNST and CSNK1D. Interacts (via C-terminus) with TJP1. Interacts (via C-terminus) with SRC (via SH3 domain). Interacts (not ubiquitinated) with UBQLN4 (via UBA domain). Interacts with NOV. Interacts with TMEM65. Interacts with ANK3/ANKG and PKP2. Phosphorylation at Ser-325, Ser-328 and Ser-330 by CK1 modulates gap junction assembly. Phosphorylated at Ser-368 by PRKCG; phosphorylation induces disassembly of gap junction plaques and inhibition of gap junction activity. Phosphorylation at Ser-368 by PRKCD triggers its internalization into small vesicles leading to proteasome-mediated degradation. In terms of processing, sumoylated with SUMO1, SUMO2 and SUMO3, which may regulate the level of functional Cx43 gap junctions at the plasma membrane. May be desumoylated by SENP1 or SENP2. Post-translationally, S-nitrosylation at Cys-271 is enriched at the muscle endothelial gap junction in arteries, it augments channel permeability and may regulate of smooth muscle cell to endothelial cell communication. Acetylated in the developing cortex; leading to delocalization from the cell membrane.

The protein resides in the cell membrane. It localises to the cell junction. It is found in the gap junction. The protein localises to the endoplasmic reticulum. In terms of biological role, gap junction protein that acts as a regulator of bladder capacity. A gap junction consists of a cluster of closely packed pairs of transmembrane channels, the connexons, through which materials of low MW diffuse from one cell to a neighboring cell. May play a critical role in the physiology of hearing by participating in the recycling of potassium to the cochlear endolymph. Negative regulator of bladder functional capacity: acts by enhancing intercellular electrical and chemical transmission, thus sensitizing bladder muscles to cholinergic neural stimuli and causing them to contract. May play a role in cell growth inhibition through the regulation of NOV expression and localization. Plays an essential role in gap junction communication in the ventricles. The protein is Gap junction alpha-1 protein (GJA1) of Oryctolagus cuniculus (Rabbit).